Reading from the N-terminus, the 419-residue chain is Potassium/proton antiporter CemA (419 aa).

4 helical membrane passes run 196–216 (LASIQYGFFLLLLPWIVTLLF), 297–317 (IIELITDFIGIFTITVILCIA), 344–364 (ILLITDLCIGFHSPHGWEVLI), and 371–391 (FGFVPNQYITSFFVSTFPVVL).

This sequence belongs to the CemA family.

It localises to the plastid. The protein resides in the chloroplast inner membrane. It carries out the reaction K(+)(in) + H(+)(out) = K(+)(out) + H(+)(in). In terms of biological role, contributes to K(+)/H(+) antiport activity by supporting proton efflux to control proton extrusion and homeostasis in chloroplasts in a light-dependent manner to modulate photosynthesis. Prevents excessive induction of non-photochemical quenching (NPQ) under continuous-light conditions. Indirectly promotes efficient inorganic carbon uptake into chloroplasts. In Chara vulgaris (Common stonewort), this protein is Potassium/proton antiporter CemA.